Consider the following 241-residue polypeptide: Proteasome subunit beta type-1 (241 aa).

An N-acetylmethionine modification is found at Met1. A propeptide spanning residues 1–28 (MLSSTAMYSAPGRDLGMEPHRAAGPLQL) is cleaved from the precursor. Ser58 carries O-linked (GlcNAc) serine glycosylation. 2 positions are modified to phosphoserine: Ser62 and Ser68. Tyr150 carries the phosphotyrosine modification. Ser162 carries the phosphoserine modification. Position 204 is an N6-acetyllysine (Lys204). A glycan (O-linked (GlcNAc) serine) is linked at Ser209.

This sequence belongs to the peptidase T1B family. In terms of assembly, the 26S proteasome consists of a 20S proteasome core and two 19S regulatory subunits. The 20S proteasome core is a barrel-shaped complex made of 28 subunits that are arranged in four stacked rings. The two outer rings are each formed by seven alpha subunits, and the two inner rings are formed by seven beta subunits. The proteolytic activity is exerted by three beta-subunits PSMB5, PSMB6 and PSMB7. Interacts with SERPINB2. Interacts with RFPL4A. (Microbial infection) Interacts with HIV-1 protein Tat.

The protein localises to the cytoplasm. Its subcellular location is the nucleus. Non-catalytic component of the 20S core proteasome complex involved in the proteolytic degradation of most intracellular proteins. This complex plays numerous essential roles within the cell by associating with different regulatory particles. Associated with two 19S regulatory particles, forms the 26S proteasome and thus participates in the ATP-dependent degradation of ubiquitinated proteins. The 26S proteasome plays a key role in the maintenance of protein homeostasis by removing misfolded or damaged proteins that could impair cellular functions, and by removing proteins whose functions are no longer required. Associated with the PA200 or PA28, the 20S proteasome mediates ubiquitin-independent protein degradation. This type of proteolysis is required in several pathways including spermatogenesis (20S-PA200 complex) or generation of a subset of MHC class I-presented antigenic peptides (20S-PA28 complex). The chain is Proteasome subunit beta type-1 from Homo sapiens (Human).